Here is a 572-residue protein sequence, read N- to C-terminus: NADP-dependent malic enzyme (572 aa).

Position 1 is an N-acetylmethionine (M1). Y102 serves as the catalytic Proton donor. R155 contacts NADP(+). K173 serves as the catalytic Proton acceptor. The a divalent metal cation site is built by E245, D246, and D269. NADP(+)-binding positions include D269 and 301–318 (GAGEAALGIAHLVVMAME). S336 carries the post-translational modification Phosphoserine.

The protein belongs to the malic enzymes family. In terms of assembly, homotetramer. Mg(2+) is required as a cofactor. The cofactor is Mn(2+).

It is found in the cytoplasm. It catalyses the reaction (S)-malate + NADP(+) = pyruvate + CO2 + NADPH. The enzyme catalyses oxaloacetate + H(+) = pyruvate + CO2. Functionally, catalyzes the oxidative decarboxylation of (S)-malate in the presence of NADP(+) and divalent metal ions, and decarboxylation of oxaloacetate. The polypeptide is NADP-dependent malic enzyme (Me1) (Mus musculus (Mouse)).